A 127-amino-acid polypeptide reads, in one-letter code: Glycine cleavage system H protein (127 aa).

The region spanning 24 to 105 (TVKVGISDHA…PYEAWLFAVR (82 aa)) is the Lipoyl-binding domain. The residue at position 65 (Lys65) is an N6-lipoyllysine.

Belongs to the GcvH family. The glycine cleavage system is composed of four proteins: P, T, L and H. Requires (R)-lipoate as cofactor.

The glycine cleavage system catalyzes the degradation of glycine. The H protein shuttles the methylamine group of glycine from the P protein to the T protein. The protein is Glycine cleavage system H protein of Methylococcus capsulatus (strain ATCC 33009 / NCIMB 11132 / Bath).